A 225-amino-acid chain; its full sequence is 7-cyano-7-deazaguanine synthase (225 aa).

ATP is bound at residue 10 to 20 (FSGGQDSTTLA). Cys-190, Cys-205, Cys-208, and Cys-211 together coordinate Zn(2+).

It belongs to the QueC family. Requires Zn(2+) as cofactor.

The enzyme catalyses 7-carboxy-7-deazaguanine + NH4(+) + ATP = 7-cyano-7-deazaguanine + ADP + phosphate + H2O + H(+). It participates in purine metabolism; 7-cyano-7-deazaguanine biosynthesis. Its function is as follows. Catalyzes the ATP-dependent conversion of 7-carboxy-7-deazaguanine (CDG) to 7-cyano-7-deazaguanine (preQ(0)). The polypeptide is 7-cyano-7-deazaguanine synthase (Helicobacter pylori (strain J99 / ATCC 700824) (Campylobacter pylori J99)).